The sequence spans 339 residues: DNA-directed RNA polymerase subunit alpha (339 aa).

Residues 1 to 233 form an alpha N-terminal domain (alpha-NTD) region; the sequence is MVREEVAGST…DLFLPFLHAE (233 aa). Residues 264–339 form an alpha C-terminal domain (alpha-CTD) region; sequence KKGIPLNCIF…IDLLKNKLSF (76 aa).

Belongs to the RNA polymerase alpha chain family. In terms of assembly, in plastids the minimal PEP RNA polymerase catalytic core is composed of four subunits: alpha, beta, beta', and beta''. When a (nuclear-encoded) sigma factor is associated with the core the holoenzyme is formed, which can initiate transcription.

It is found in the plastid. The protein resides in the chloroplast. The enzyme catalyses RNA(n) + a ribonucleoside 5'-triphosphate = RNA(n+1) + diphosphate. In terms of biological role, DNA-dependent RNA polymerase catalyzes the transcription of DNA into RNA using the four ribonucleoside triphosphates as substrates. The polypeptide is DNA-directed RNA polymerase subunit alpha (Heteranthelium piliferum (Elymus pilifer)).